We begin with the raw amino-acid sequence, 257 residues long: Exosome complex component Rrp4 (257 aa).

An S1 motif domain is found at 65 to 137; the sequence is GDNVLGKIVD…EVNQIDLTTK (73 aa). The region spanning 147–206 is the KH domain; the sequence is RGGQLVTITPSKVPRLIGKGGSMINMIKTLTGTRIIVGQNGWVWVSGKNDELERLAIEAI.

The protein belongs to the RRP4 family. In terms of assembly, component of the archaeal exosome complex. Forms a trimer of Rrp4 and/or Csl4 subunits. The trimer associates with a hexameric ring-like arrangement composed of 3 Rrp41-Rrp42 heterodimers.

The protein resides in the cytoplasm. Non-catalytic component of the exosome, which is a complex involved in RNA degradation. Increases the RNA binding and the efficiency of RNA degradation. Confers strong poly(A) specificity to the exosome. The protein is Exosome complex component Rrp4 of Thermococcus kodakarensis (strain ATCC BAA-918 / JCM 12380 / KOD1) (Pyrococcus kodakaraensis (strain KOD1)).